Consider the following 955-residue polypeptide: 2-oxoglutarate dehydrogenase E1 component (955 aa).

It belongs to the alpha-ketoglutarate dehydrogenase family. In terms of assembly, homodimer. Part of the 2-oxoglutarate dehydrogenase (OGDH) complex composed of E1 (2-oxoglutarate dehydrogenase), E2 (dihydrolipoamide succinyltransferase) and E3 (dihydrolipoamide dehydrogenase); the complex contains multiple copies of the three enzymatic components (E1, E2 and E3). Thiamine diphosphate is required as a cofactor.

It catalyses the reaction N(6)-[(R)-lipoyl]-L-lysyl-[protein] + 2-oxoglutarate + H(+) = N(6)-[(R)-S(8)-succinyldihydrolipoyl]-L-lysyl-[protein] + CO2. In terms of biological role, E1 component of the 2-oxoglutarate dehydrogenase (OGDH) complex which catalyzes the decarboxylation of 2-oxoglutarate, the first step in the conversion of 2-oxoglutarate to succinyl-CoA and CO(2). This Bacillus cereus (strain ZK / E33L) protein is 2-oxoglutarate dehydrogenase E1 component.